Here is a 357-residue protein sequence, read N- to C-terminus: DNA replication and repair protein RecF (357 aa).

30–37 serves as a coordination point for ATP; that stretch reads GANGSGKT.

The protein belongs to the RecF family.

The protein localises to the cytoplasm. In terms of biological role, the RecF protein is involved in DNA metabolism; it is required for DNA replication and normal SOS inducibility. RecF binds preferentially to single-stranded, linear DNA. It also seems to bind ATP. This is DNA replication and repair protein RecF from Salmonella paratyphi B (strain ATCC BAA-1250 / SPB7).